The primary structure comprises 311 residues: MPLRLIFMGTPDFAVPTLLELAGHGHEIAAVYTRAPKPGGRRGLALVPTPIETEARRLGIPVVTPKTLKTEEALTAFRAHQADAAVVVAYGMILPQAILDAPKLGCYNLHASLLPRWRGAAPINRAIMAGDAETGVMVMKMDVGLDTGDVAMAERLPITDAMTASDLHDQLARIGADLMVRAMAALERGGLTLTKQADAGVTYAAKIEKAEARIDWSKPANAVLRHIHGLSPFPGAWSEVTLDGEAVRLKILRCALADGRGEPGAVINEQLTIACADGAVRVTELQRAGKGPMKAADFLRGTRVAPGLRFG.

Serine 112–proline 115 is a (6S)-5,6,7,8-tetrahydrofolate binding site.

Belongs to the Fmt family.

It carries out the reaction L-methionyl-tRNA(fMet) + (6R)-10-formyltetrahydrofolate = N-formyl-L-methionyl-tRNA(fMet) + (6S)-5,6,7,8-tetrahydrofolate + H(+). Its function is as follows. Attaches a formyl group to the free amino group of methionyl-tRNA(fMet). The formyl group appears to play a dual role in the initiator identity of N-formylmethionyl-tRNA by promoting its recognition by IF2 and preventing the misappropriation of this tRNA by the elongation apparatus. The chain is Methionyl-tRNA formyltransferase from Bradyrhizobium sp. (strain BTAi1 / ATCC BAA-1182).